A 196-amino-acid chain; its full sequence is Holliday junction branch migration complex subunit RuvA (196 aa).

The domain I stretch occupies residues 1–63 (MISFVSGRVA…EDSLTLYGFA (63 aa)). The interval 64–136 (DDDERTVFEL…LKDRLGTPST (73 aa)) is domain II. The flexible linker stretch occupies residues 136–140 (TAAAE). Residues 141-196 (STSGWRDAVHAGLLNLGYTARQADEAIAAIAGELDDSAAVDTATALRLALATLKRP) form a domain III region.

Belongs to the RuvA family. As to quaternary structure, homotetramer. Forms an RuvA(8)-RuvB(12)-Holliday junction (HJ) complex. HJ DNA is sandwiched between 2 RuvA tetramers; dsDNA enters through RuvA and exits via RuvB. An RuvB hexamer assembles on each DNA strand where it exits the tetramer. Each RuvB hexamer is contacted by two RuvA subunits (via domain III) on 2 adjacent RuvB subunits; this complex drives branch migration. In the full resolvosome a probable DNA-RuvA(4)-RuvB(12)-RuvC(2) complex forms which resolves the HJ.

The protein localises to the cytoplasm. Its function is as follows. The RuvA-RuvB-RuvC complex processes Holliday junction (HJ) DNA during genetic recombination and DNA repair, while the RuvA-RuvB complex plays an important role in the rescue of blocked DNA replication forks via replication fork reversal (RFR). RuvA specifically binds to HJ cruciform DNA, conferring on it an open structure. The RuvB hexamer acts as an ATP-dependent pump, pulling dsDNA into and through the RuvAB complex. HJ branch migration allows RuvC to scan DNA until it finds its consensus sequence, where it cleaves and resolves the cruciform DNA. The sequence is that of Holliday junction branch migration complex subunit RuvA from Acidothermus cellulolyticus (strain ATCC 43068 / DSM 8971 / 11B).